Consider the following 272-residue polypeptide: Iodotyrosine deiodinase (272 aa).

A helical transmembrane segment spans residues 5–25; it reads LSGVSYGLLAGILAMLIHLVY. FMN-binding positions include 82–86, Ser110, and 110–111; these read RRSVR and SG. Residues Ala112, Glu139, Tyr143, and Lys164 each coordinate 3-iodo-L-tyrosine. Residues 219-221 and Arg261 contribute to the FMN site; that span reads TST.

This sequence belongs to the nitroreductase family. Requires FMN as cofactor.

The protein resides in the membrane. The enzyme catalyses 2 iodide + L-tyrosine + 2 NADP(+) = 3,5-diiodo-L-tyrosine + 2 NADPH + H(+). It catalyses the reaction iodide + L-tyrosine + NADP(+) = 3-iodo-L-tyrosine + NADPH. The catalysed reaction is 3-iodo-L-tyrosine + iodide + NADP(+) = 3,5-diiodo-L-tyrosine + NADPH + H(+). It carries out the reaction L-tyrosine + chloride + NADP(+) = 3-chloro-L-tyrosine + NADPH. The enzyme catalyses bromide + L-tyrosine + NADP(+) = 3-bromo-L-tyrosine + NADPH. Its function is as follows. Catalyzes the dehalogenation of halotyrosines such as 3,5-diiodo-L-tyrosine. Likely to also catalyze the dehalogenation of other halotyrosines such as 3-bromo-L-tyrosine, 3-chloro-L-tyrosine and 3-iodo-L-tyrosine. The protein is Iodotyrosine deiodinase of Hydra vulgaris (Hydra).